The following is a 1275-amino-acid chain: Membrane-associated guanylate kinase, WW and PDZ domain-containing protein 2 (1275 aa).

The 85-residue stretch at 17–101 (ESVIGRNPEG…PLRLKCVKQG (85 aa)) folds into the PDZ 1 domain. Residues 109–283 (RHYLNLRFQK…PVYSQPEELK (175 aa)) enclose the Guanylate kinase-like domain. Residues 203–305 (LPGATPSAEG…ENEDSDPLPD (103 aa)) are disordered. Over residues 280-295 (EELKDQMDDTKPTKPE) the composition is skewed to basic and acidic residues. WW domains follow at residues 301–334 (DPLP…DPRL) and 347–380 (NELP…NPVL). The interval 301 to 380 (DPLPDNWEMA…RRTQFENPVL (80 aa)) is interaction with DDN. Position 361 is a phosphotyrosine (tyrosine 361). PDZ domains follow at residues 425 to 509 (STTL…CRGY) and 604 to 682 (TLTI…HRGG). At serine 685 the chain carries Phosphoserine. Residues 698–740 (ENQGSPQTSLSAPAVPQNLPFPPALHRSSFPDSTEAFDPRKPD) are disordered. Polar residues predominate over residues 699–708 (NQGSPQTSLS). A PDZ 4 domain is found at 777–859 (DVHLRRMESG…NGQVNLTVRR (83 aa)). The residue at position 826 (tyrosine 826) is a Phosphotyrosine. A disordered region spans residues 868 to 912 (CPENGRSPGSVSTHHSSPRSDYATYSNSNHAAPSSNASPPEGFAS). Residues serine 883 and serine 884 each carry the phosphoserine modification. The segment covering 893-907 (SNSNHAAPSSNASPP) has biased composition (low complexity). The PDZ 5 domain occupies 919–1009 (DVVIHRKENE…SVTLRIIPQE (91 aa)). Polar residues predominate over residues 1010-1040 (ELNSPTSAPSSEKQSPMAQQHSPLAQQSPLA). Residues 1010–1128 (ELNSPTSAPS…PDTRQYPLSD (119 aa)) are disordered. Serine 1013 is modified (phosphoserine). The segment covering 1067 to 1083 (NSYRSEVKARQDVKPDI) has biased composition (basic and acidic residues). The PDZ 6 domain maps to 1139-1221 (TVDMEKGAKG…RVRLLLKRGT (83 aa)).

Belongs to the MAGUK family. As to quaternary structure, interacts (via its WW domains) with DRPLA. Interacts (via its second PDZ domain) with PTEN (via unphosphorylated C-terminus); this interaction diminishes the degradation rate of PTEN. Interacts (via guanylate kinase domain) with DLGAP1. Interacts (via the PDZ domains) with GRIN2A, GRID2 and NLGN1. Interacts with CTNND2, CTNNB1 and MAGUIN-1. Interacts with ACVR2A, SMAD2 and SMAD3. Part of a complex consisting of MAGI2/ARIP1, ACVR2A, ACVR1B and SMAD3. May interact with HTR2A. Interacts with RAPGEF2. Identified in a complex with ACTN4, CASK, IQGAP1, NPHS1, SPTAN1 and SPTBN1. Interacts with DDN. Found in a complex, at least composed of KIDINS220, MAGI2, NTRK1 and RAPGEF2; the complex is mainly formed at late endosomes in a NGF-dependent manner. Interacts with RAPGEF2; the interaction occurs before or after nerve growth factor (NGF) stimulation. Interacts (via PDZ domain) with KIDINS220 (via C-terminal domain). Interacts with IGSF9 and HTR4. Interacts with DLL1. Found in a complex with IGSF9B and NLGN2; the interaction with IGSF9B is mediated via the PDZ 5 and PDZ 6 domains, while the interaction with NLGN2 is mediated via the WW1, WW2 and PDZ2 domains. Interacts (via PDZ 6 domain) with USH1G (via SAM domain); the interaction is triggered by phosphorylation of USH1G by CK2 and negatively regulates MAGI2-mediated endocytosis. In terms of tissue distribution, expressed throughout the retina except in the nuclear layers and the photoreceptor outer segments (at protein level). Highest retinal expression is observed in the outer plexiform layer, the outer limiting membrane and the inner segment of photoreceptor cells (at protein level). Expressed in brain.

It localises to the cytoplasm. It is found in the late endosome. The protein localises to the synapse. Its subcellular location is the synaptosome. The protein resides in the cell membrane. It localises to the cytoskeleton. It is found in the microtubule organizing center. The protein localises to the centrosome. Its subcellular location is the cell projection. The protein resides in the cilium. It localises to the centriole. It is found in the photoreceptor inner segment. The protein localises to the photoreceptor outer segment. In terms of biological role, seems to act as a scaffold molecule at synaptic junctions by assembling neurotransmitter receptors and cell adhesion proteins. Plays a role in nerve growth factor (NGF)-induced recruitment of RAPGEF2 to late endosomes and neurite outgrowth. May play a role in regulating activin-mediated signaling in neuronal cells. Enhances the ability of PTEN to suppress AKT1 activation. Plays a role in receptor-mediated clathrin-dependent endocytosis which is required for ciliogenesis. The chain is Membrane-associated guanylate kinase, WW and PDZ domain-containing protein 2 (Magi2) from Mus musculus (Mouse).